The primary structure comprises 690 residues: Secreted LysM effector Vd5LysM (690 aa).

Residues Asn4 and Asn69 are each glycosylated (N-linked (GlcNAc...) asparagine). 3 LysM domains span residues 203–248 (TQYT…SLCI), 253–301 (DTVT…TLCI), and 341–387 (RWYN…SYCV). Residues Asn260, Asn295, Asn375, Asn410, Asn423, and Asn492 are each glycosylated (N-linked (GlcNAc...) asparagine). The segment at 523–546 (PATATTGDGGPTPPAPTHSGQPQD) is disordered. The region spanning 549–596 (TWHVVSSGDSCQSVADDAGISRDQFHDWNPAVGRDCSTNFWLGQAYCV) is the LysM 4 domain. Over residues 606–619 (STVASSTTSSVTPG) the composition is skewed to low complexity. The segment at 606–636 (STVASSTTSSVTPGPSKPEPPGPTHTGQPSD) is disordered. The LysM 5 domain occupies 639 to 686 (EWDVVETGDTCGSLAESNDISLSQFFDWNPAVSRDCVANFWIGQAYCI).

The protein belongs to the secreted LysM effector family.

In terms of biological role, might have a role in sequestration of chitin oligosaccharides (breakdown products of fungal cell walls that are released during invasion and act as triggers of host immunity) to dampen host defense. Does not play an important role during host colonization. The protein is Secreted LysM effector Vd5LysM of Verticillium dahliae (strain VdLs.17 / ATCC MYA-4575 / FGSC 10137) (Verticillium wilt).